The primary structure comprises 166 residues: Cyclic pyranopterin monophosphate synthase (166 aa).

Substrate-binding positions include 83 to 85 (LCH) and 121 to 122 (ME). Residue Asp136 is part of the active site.

It belongs to the MoaC family. In terms of assembly, homohexamer; trimer of dimers.

The enzyme catalyses (8S)-3',8-cyclo-7,8-dihydroguanosine 5'-triphosphate = cyclic pyranopterin phosphate + diphosphate. Its pathway is cofactor biosynthesis; molybdopterin biosynthesis. Its function is as follows. Catalyzes the conversion of (8S)-3',8-cyclo-7,8-dihydroguanosine 5'-triphosphate to cyclic pyranopterin monophosphate (cPMP). In Syntrophobacter fumaroxidans (strain DSM 10017 / MPOB), this protein is Cyclic pyranopterin monophosphate synthase.